The chain runs to 673 residues: DNA ligase (673 aa).

Residues 32–36 (DHVYD), 81–82 (SL), and E111 each bind NAD(+). K113 functions as the N6-AMP-lysine intermediate in the catalytic mechanism. The NAD(+) site is built by R134, E171, K286, and K310. Residues C404, C407, C422, and C428 each contribute to the Zn(2+) site. In terms of domain architecture, BRCT spans 595-673 (NIIDEYKNKT…NEFWKKDNNF (79 aa)).

This sequence belongs to the NAD-dependent DNA ligase family. LigA subfamily. It depends on Mg(2+) as a cofactor. Mn(2+) serves as cofactor.

The catalysed reaction is NAD(+) + (deoxyribonucleotide)n-3'-hydroxyl + 5'-phospho-(deoxyribonucleotide)m = (deoxyribonucleotide)n+m + AMP + beta-nicotinamide D-nucleotide.. DNA ligase that catalyzes the formation of phosphodiester linkages between 5'-phosphoryl and 3'-hydroxyl groups in double-stranded DNA using NAD as a coenzyme and as the energy source for the reaction. It is essential for DNA replication and repair of damaged DNA. This Ureaplasma urealyticum serovar 10 (strain ATCC 33699 / Western) protein is DNA ligase.